The sequence spans 148 residues: Ubiquitin conjugating enzyme E2 B (148 aa).

Residues 2–148 enclose the UBC core domain; it reads AAHKRLQKEI…AKEWTKKYAK (147 aa). Cysteine 87 (glycyl thioester intermediate) is an active-site residue.

The protein belongs to the ubiquitin-conjugating enzyme family. As to quaternary structure, interacts with mkkA (via F-box/WD40 repeat domains).

The catalysed reaction is S-ubiquitinyl-[E1 ubiquitin-activating enzyme]-L-cysteine + [E2 ubiquitin-conjugating enzyme]-L-cysteine = [E1 ubiquitin-activating enzyme]-L-cysteine + S-ubiquitinyl-[E2 ubiquitin-conjugating enzyme]-L-cysteine.. It participates in protein modification; protein ubiquitination. Its function is as follows. Involved in protein ubiquitination and degradation during development. Mediates protein ubiquitination at the mound and finger stage required for subsequent development and may be an essential component of the developmental transition between the induction of postaggregative gene expression and subsequent cell-type differentiation and morphogenesis. ubcB and ubpB differentially control ubiquitination/deubiquitination and degradation of mkkA protein in a cell-type-specific and temporally regulated manner. The polypeptide is Ubiquitin conjugating enzyme E2 B (ubcB) (Dictyostelium discoideum (Social amoeba)).